Here is a 394-residue protein sequence, read N- to C-terminus: 1-deoxy-D-xylulose 5-phosphate reductoisomerase (394 aa).

Thr-6, Gly-7, Ser-8, Ile-9, Ala-32, and Asn-124 together coordinate NADPH. Position 125 (Lys-125) interacts with 1-deoxy-D-xylulose 5-phosphate. Glu-126 lines the NADPH pocket. Asp-148 contacts Mn(2+). 1-deoxy-D-xylulose 5-phosphate contacts are provided by Ser-149, Glu-150, Ser-174, and His-197. Position 150 (Glu-150) interacts with Mn(2+). Position 203 (Gly-203) interacts with NADPH. 4 residues coordinate 1-deoxy-D-xylulose 5-phosphate: Ser-210, Asn-215, Lys-216, and Glu-219. Residue Glu-219 coordinates Mn(2+).

The protein belongs to the DXR family. Mg(2+) serves as cofactor. Mn(2+) is required as a cofactor.

The catalysed reaction is 2-C-methyl-D-erythritol 4-phosphate + NADP(+) = 1-deoxy-D-xylulose 5-phosphate + NADPH + H(+). The protein operates within isoprenoid biosynthesis; isopentenyl diphosphate biosynthesis via DXP pathway; isopentenyl diphosphate from 1-deoxy-D-xylulose 5-phosphate: step 1/6. Functionally, catalyzes the NADPH-dependent rearrangement and reduction of 1-deoxy-D-xylulose-5-phosphate (DXP) to 2-C-methyl-D-erythritol 4-phosphate (MEP). The protein is 1-deoxy-D-xylulose 5-phosphate reductoisomerase of Streptomyces avermitilis (strain ATCC 31267 / DSM 46492 / JCM 5070 / NBRC 14893 / NCIMB 12804 / NRRL 8165 / MA-4680).